Consider the following 282-residue polypeptide: Trans,polycis-polyprenyl diphosphate synthase ((2Z,6E)-farnesyl diphosphate specific) (282 aa).

A disordered region spans residues 1 to 30; sequence MSPKTVFSTDTHREPIPPQPHPSGARPPQL. Residue aspartate 44 is part of the active site. Residue aspartate 44 participates in Mg(2+) binding. Substrate contacts are provided by residues 45-48, tryptophan 49, arginine 57, histidine 61, and 89-91; these read GNGR and STE. The active-site Proton acceptor is asparagine 92. Substrate-binding positions include tryptophan 93, arginine 95, arginine 212, and 218 to 220; that span reads RLS. Position 231 (glutamate 231) interacts with Mg(2+). Residues 262–282 are disordered; that stretch reads GGAEPNPVGPPQSAAGAQGQD.

It belongs to the UPP synthase family. As to quaternary structure, homodimer. Requires Mg(2+) as cofactor.

The catalysed reaction is (2Z,6E)-farnesyl diphosphate + 10 isopentenyl diphosphate = di-trans,deca-cis-tridecaprenyl diphosphate + 10 diphosphate. It catalyses the reaction (2Z,6E)-farnesyl diphosphate + 11 isopentenyl diphosphate = di-trans,undeca-cis-tetradecaprenyl diphosphate + 11 diphosphate. The enzyme catalyses (2Z,6E)-farnesyl diphosphate + 9 isopentenyl diphosphate = di-trans,nona-cis-dodecaprenyl diphosphate + 9 diphosphate. Catalyzes the synthesis of Z,E-mixed prenyl diphosphates by a condensation of isopentenyl diphosphate to an allylic diphosphate. It shows a large substrate specificity accepting dimethylallyl diphosphate (DMAPP), GPP, E,Efarnesyl diphosphate (FPP), E,E,E-geranylgeranyl diphosphate (GGPP), neryl diphosphate (Z-GPP), and (2Z,6E)-farnesyl diphosphate (Z,E-FPP) as allylic substrates. The enzyme exhibits the highest activity when Z,E-FPP is employed as an allylic substrate. The major product is dodecaprenyl diphosphate (C60) under every allylic substrate conditions, but the enzyme is also able to synthesize even C70 prenyl diphosphate as the maximum chain-length product. This is Trans,polycis-polyprenyl diphosphate synthase ((2Z,6E)-farnesyl diphosphate specific) from Thermobifida fusca (strain YX).